We begin with the raw amino-acid sequence, 167 residues long: C-X-C motif chemokine 15 (167 aa).

The first 25 residues, 1 to 25 (MAAQGWSMLLLAVLNLGIFVRPCDT), serve as a signal peptide directing secretion. Cystine bridges form between C30-C57 and C32-C73. The residue at position 157 (S157) is a Phosphoserine.

The protein belongs to the intercrine alpha (chemokine CxC) family. Expression restricted to the lung, produced by bronchoepithelial cells and is released into the airways. Expressed at low levels in fetal lung.

The protein resides in the secreted. Chemotactic for neutrophils. Involved in lung-specific neutrophil trafficking during normal and inflammatory conditions. This chain is C-X-C motif chemokine 15 (Cxcl15), found in Mus musculus (Mouse).